Reading from the N-terminus, the 514-residue chain is Histidine ammonia-lyase (514 aa).

A cross-link (5-imidazolinone (Ala-Gly)) is located at residues 147–149; it reads ASG. S148 is modified (2,3-didehydroalanine (Ser)).

It belongs to the PAL/histidase family. Contains an active site 4-methylidene-imidazol-5-one (MIO), which is formed autocatalytically by cyclization and dehydration of residues Ala-Ser-Gly.

Its subcellular location is the cytoplasm. It catalyses the reaction L-histidine = trans-urocanate + NH4(+). Its pathway is amino-acid degradation; L-histidine degradation into L-glutamate; N-formimidoyl-L-glutamate from L-histidine: step 1/3. This chain is Histidine ammonia-lyase, found in Gloeobacter violaceus (strain ATCC 29082 / PCC 7421).